A 156-amino-acid polypeptide reads, in one-letter code: Endogenous retrovirus group K member 7 Pro protein (156 aa).

The 76-residue stretch at 21–96 (FEGLVDTGAD…IPLNLWGRDL (76 aa)) folds into the Peptidase A2 domain. The active site involves D26. Residues 111-156 (YSPTSQKIMTKMGYIPGKGLGKNEDGIKVPVEAKINQEREGIGYPF) form the G-patch domain.

Belongs to the peptidase A2 family. HERV class-II K(HML-2) subfamily. In terms of assembly, active as a homodimer. In terms of processing, autoproteolytically processed at the N-terminus. Expected C-terminal autoprocessing not detected. The sequence shown is that of the processed Pro protein.

It catalyses the reaction Processing at the authentic HIV-1 PR recognition site and release of the mature p17 matrix and the p24 capsid protein, as a result of the cleavage of the -SQNY-|-PIVQ- cleavage site.. Retroviral proteases have roles in processing of the primary translation products and the maturation of the viral particle. Endogenous Pro proteins may have kept, lost or modified their original function during evolution. This endogenous protein has retained most of the characteristics of retroviral proteases. In Homo sapiens (Human), this protein is Endogenous retrovirus group K member 7 Pro protein (ERVK-7).